The sequence spans 80 residues: Large ribosomal subunit protein bL31B (80 aa).

It belongs to the bacterial ribosomal protein bL31 family. Type B subfamily. In terms of assembly, part of the 50S ribosomal subunit.

The protein is Large ribosomal subunit protein bL31B of Shouchella clausii (strain KSM-K16) (Alkalihalobacillus clausii).